We begin with the raw amino-acid sequence, 310 residues long: Ribosomal RNA small subunit methyltransferase H (310 aa).

S-adenosyl-L-methionine-binding positions include 32 to 34 (GGH), Asp-52, Phe-79, Asp-100, and Gln-107.

It belongs to the methyltransferase superfamily. RsmH family.

The protein localises to the cytoplasm. It catalyses the reaction cytidine(1402) in 16S rRNA + S-adenosyl-L-methionine = N(4)-methylcytidine(1402) in 16S rRNA + S-adenosyl-L-homocysteine + H(+). Specifically methylates the N4 position of cytidine in position 1402 (C1402) of 16S rRNA. In Bacillus anthracis (strain A0248), this protein is Ribosomal RNA small subunit methyltransferase H.